We begin with the raw amino-acid sequence, 78 residues long: Acyl carrier protein (78 aa).

The 76-residue stretch at 2-77 (SDTADRVKKI…DAIKYIDENK (76 aa)) folds into the Carrier domain. Serine 37 carries the O-(pantetheine 4'-phosphoryl)serine modification.

The protein belongs to the acyl carrier protein (ACP) family. 4'-phosphopantetheine is transferred from CoA to a specific serine of apo-ACP by AcpS. This modification is essential for activity because fatty acids are bound in thioester linkage to the sulfhydryl of the prosthetic group.

The protein localises to the cytoplasm. It participates in lipid metabolism; fatty acid biosynthesis. Carrier of the growing fatty acid chain in fatty acid biosynthesis. The polypeptide is Acyl carrier protein (Novosphingobium aromaticivorans (strain ATCC 700278 / DSM 12444 / CCUG 56034 / CIP 105152 / NBRC 16084 / F199)).